The chain runs to 430 residues: Corticosteroid-binding globulin (430 aa).

The N-terminal stretch at Met-1–Ala-22 is a signal peptide. 3 N-linked (GlcNAc...) asparagine glycosylation sites follow: Asn-119, Asn-175, and Asn-243. A cortisol-binding site is contributed by Gln-253. Asn-259 is a glycosylation site (N-linked (GlcNAc...) asparagine). Position 285 (Gln-285) interacts with cortisol. N-linked (GlcNAc...) asparagine glycosylation is present at Asn-326. Trp-392 contacts cortisol.

It belongs to the serpin family. As to expression, expressed by the liver; secreted in plasma.

It is found in the secreted. Its function is as follows. Major transport protein for glucocorticoids and progestins in the blood of almost all vertebrate species. The polypeptide is Corticosteroid-binding globulin (SERPINA6) (Ovis aries (Sheep)).